The chain runs to 156 residues: rRNA methyltransferase (156 aa).

Its function is as follows. Modifies 16S rRNA so making ribosomes resistant to certain aminoglycosides. The protein is rRNA methyltransferase (kamC) of Saccharopolyspora hirsuta.